A 149-amino-acid polypeptide reads, in one-letter code: Peptide deformylase (149 aa).

Positions 92 and 134 each coordinate Fe cation. Glu135 is a catalytic residue. Fe cation is bound at residue His138.

The protein belongs to the polypeptide deformylase family. Fe(2+) is required as a cofactor.

The enzyme catalyses N-terminal N-formyl-L-methionyl-[peptide] + H2O = N-terminal L-methionyl-[peptide] + formate. Functionally, removes the formyl group from the N-terminal Met of newly synthesized proteins. Requires at least a dipeptide for an efficient rate of reaction. N-terminal L-methionine is a prerequisite for activity but the enzyme has broad specificity at other positions. The sequence is that of Peptide deformylase from Buchnera aphidicola subsp. Cinara cedri (strain Cc).